The primary structure comprises 180 residues: 3-deoxy-D-manno-octulosonate 8-phosphate phosphatase KdsC (180 aa).

Mg(2+)-binding residues include Asp14 and Asp16. Residues Asp16, 37–41 (HVRDG), Lys45, Arg60, Arg68, and Lys84 contribute to the substrate site. Mg(2+) is bound at residue Asp107.

Belongs to the KdsC family. In terms of assembly, homotetramer. The cofactor is Mg(2+).

It carries out the reaction 3-deoxy-alpha-D-manno-2-octulosonate-8-phosphate + H2O = 3-deoxy-alpha-D-manno-oct-2-ulosonate + phosphate. Catalyzes the hydrolysis of 3-deoxy-D-manno-octulosonate 8-phosphate (KDO 8-P) to 3-deoxy-D-manno-octulosonate (KDO) and inorganic phosphate. This chain is 3-deoxy-D-manno-octulosonate 8-phosphate phosphatase KdsC, found in Haemophilus influenzae (strain ATCC 51907 / DSM 11121 / KW20 / Rd).